The chain runs to 421 residues: Ubiquitin-like modifier-activating enzyme 5 (421 aa).

Positions 89, 110, 133, 156, and 191 each coordinate ATP. Residues Cys233 and Cys236 each contribute to the Zn(2+) site. Cys257 (glycyl thioester intermediate) is an active-site residue. Residues Cys310 and Cys315 each contribute to the Zn(2+) site.

This sequence belongs to the ubiquitin-activating E1 family. UBA5 subfamily.

Functionally, E1-like enzyme which activates UFM1. The sequence is that of Ubiquitin-like modifier-activating enzyme 5 from Oryza sativa subsp. japonica (Rice).